The primary structure comprises 242 residues: UPF0173 metal-dependent hydrolase Rxyl_1261 (242 aa).

It belongs to the UPF0173 family.

This is UPF0173 metal-dependent hydrolase Rxyl_1261 from Rubrobacter xylanophilus (strain DSM 9941 / JCM 11954 / NBRC 16129 / PRD-1).